The sequence spans 108 residues: UPF0060 membrane protein RSKD131_0092 (108 aa).

The next 4 membrane-spanning stretches (helical) occupy residues 5–25, 32–52, 62–82, and 86–106; these read LAAYAGAALAEIAGCFAVWAW, ALWLVPGALSLGAFAWLLALT, AVYGGIYVAASLLWLWAVEGV, and RWDMGGAALVLAGAAVILWAP.

Belongs to the UPF0060 family.

The protein localises to the cell inner membrane. This chain is UPF0060 membrane protein RSKD131_0092, found in Cereibacter sphaeroides (strain KD131 / KCTC 12085) (Rhodobacter sphaeroides).